We begin with the raw amino-acid sequence, 168 residues long: ATP synthase subunit b, sodium ion specific (168 aa).

A helical transmembrane segment spans residues 9-29 (VSIDINMFWQIINFLILMFFF).

This sequence belongs to the ATPase B chain family. As to quaternary structure, F-type ATPases have 2 components, F(1) - the catalytic core - and F(0) - the membrane proton channel. F(1) has five subunits: alpha(3), beta(3), gamma(1), delta(1), epsilon(1). F(0) has three main subunits: a(1), b(2) and c(10-14). The alpha and beta chains form an alternating ring which encloses part of the gamma chain. F(1) is attached to F(0) by a central stalk formed by the gamma and epsilon chains, while a peripheral stalk is formed by the delta and b chains.

The protein localises to the cell inner membrane. F(1)F(0) ATP synthase produces ATP from ADP in the presence of a proton or sodium gradient. F-type ATPases consist of two structural domains, F(1) containing the extramembraneous catalytic core and F(0) containing the membrane proton channel, linked together by a central stalk and a peripheral stalk. During catalysis, ATP synthesis in the catalytic domain of F(1) is coupled via a rotary mechanism of the central stalk subunits to proton translocation. Its function is as follows. Component of the F(0) channel, it forms part of the peripheral stalk, linking F(1) to F(0). This chain is ATP synthase subunit b, sodium ion specific (atpF), found in Propionigenium modestum.